The following is a 118-amino-acid chain: NLYQFKNMIHCTVPSRPWWHFADYGCYCGRGGKGTAVDDLDRCCQVHDNCYGEAEKLGCWPYLTLYKYECSQGKLTCSGGNNKCEAAVCNCDLVAANCFAGAPYIDANYNVNLKERCQ.

Intrachain disulfides connect cysteine 11–cysteine 70, cysteine 26–cysteine 117, cysteine 28–cysteine 44, cysteine 43–cysteine 98, cysteine 50–cysteine 91, cysteine 59–cysteine 84, and cysteine 77–cysteine 89. The Ca(2+) site is built by tyrosine 27, glycine 29, and glycine 31. Histidine 47 is a catalytic residue. A Ca(2+)-binding site is contributed by aspartate 48. Aspartate 92 is an active-site residue.

Belongs to the phospholipase A2 family. Group I subfamily. D49 sub-subfamily. Ca(2+) is required as a cofactor. As to expression, expressed by the venom gland.

It is found in the secreted. It carries out the reaction a 1,2-diacyl-sn-glycero-3-phosphocholine + H2O = a 1-acyl-sn-glycero-3-phosphocholine + a fatty acid + H(+). Its function is as follows. Snake venom phospholipase A2 (PLA2) that causes myonecrosis when injected intramuscularly, shows indirect hemolytic activity, abolishes twitches evoked by indirect stimulation earlier than those by direct stimulation (in the mouse phrenic nerve-diaphragm preparation) but does not produce complete neuromuscular block (up to 30 ug/ml) (in the chick biventer cervicis nerve-muscle preparation). PLA2 catalyzes the calcium-dependent hydrolysis of the 2-acyl groups in 3-sn-phosphoglycerides. This is Acidic phospholipase A2 CM-I from Naja mossambica (Mozambique spitting cobra).